Consider the following 374-residue polypeptide: tRNA-specific 2-thiouridylase MnmA (374 aa).

ATP-binding positions include Gly-17–Ser-24 and Met-43. Positions Asn-103–Asp-105 are interaction with target base in tRNA. Residue Cys-108 is the Nucleophile of the active site. An intrachain disulfide couples Cys-108 to Cys-204. Gly-132 is an ATP binding site. The tract at residues Lys-154–Gln-156 is interaction with tRNA. Cys-204 serves as the catalytic Cysteine persulfide intermediate. Residues Arg-316–Tyr-317 form an interaction with tRNA region.

This sequence belongs to the MnmA/TRMU family.

Its subcellular location is the cytoplasm. The enzyme catalyses S-sulfanyl-L-cysteinyl-[protein] + uridine(34) in tRNA + AH2 + ATP = 2-thiouridine(34) in tRNA + L-cysteinyl-[protein] + A + AMP + diphosphate + H(+). In terms of biological role, catalyzes the 2-thiolation of uridine at the wobble position (U34) of tRNA, leading to the formation of s(2)U34. In Pseudomonas fluorescens (strain Pf0-1), this protein is tRNA-specific 2-thiouridylase MnmA.